The following is a 444-amino-acid chain: Tol-Pal system protein TolB (444 aa).

A signal peptide spans 1-18 (MRNIIYFILLLFSCTGYA).

It belongs to the TolB family. The Tol-Pal system is composed of five core proteins: the inner membrane proteins TolA, TolQ and TolR, the periplasmic protein TolB and the outer membrane protein Pal. They form a network linking the inner and outer membranes and the peptidoglycan layer.

Its subcellular location is the periplasm. Functionally, part of the Tol-Pal system, which plays a role in outer membrane invagination during cell division and is important for maintaining outer membrane integrity. This is Tol-Pal system protein TolB from Rickettsia canadensis (strain McKiel).